A 458-amino-acid chain; its full sequence is Exodeoxyribonuclease 7 large subunit (458 aa).

It belongs to the XseA family. As to quaternary structure, heterooligomer composed of large and small subunits.

The protein localises to the cytoplasm. It catalyses the reaction Exonucleolytic cleavage in either 5'- to 3'- or 3'- to 5'-direction to yield nucleoside 5'-phosphates.. Bidirectionally degrades single-stranded DNA into large acid-insoluble oligonucleotides, which are then degraded further into small acid-soluble oligonucleotides. This Escherichia coli O17:K52:H18 (strain UMN026 / ExPEC) protein is Exodeoxyribonuclease 7 large subunit.